A 622-amino-acid chain; its full sequence is Iron transport multicopper oxidase FET5 (622 aa).

The first 18 residues, 1–18, serve as a signal peptide directing secretion; that stretch reads MLFYSFVWSVLAASVALA. Residues 19–573 lie on the Extracellular side of the membrane; the sequence is KTHKLNYTAS…PKGFTTEGYL (555 aa). An N-linked (GlcNAc...) asparagine glycan is attached at Asn24. Plastocyanin-like domains are found at residues 43–146 and 192–301; these read IGFN…FIIH and NILF…IQMR. Cu cation is bound by residues His79 and His81. Asn86 and Asn115 each carry an N-linked (GlcNAc...) asparagine glycan. Residues His128 and His130 each coordinate Cu cation. N-linked (GlcNAc...) asparagine glycans are attached at residues Asn196, Asn200, Asn246, Asn295, and Asn364. The Plastocyanin-like 3 domain occupies 392–514; sequence GDNINAQLLK…QGLASVFIEA (123 aa). 3 residues coordinate Cu cation: His418, His421, and His423. N-linked (GlcNAc...) asparagine glycosylation occurs at Asn455. Positions 496, 497, 498, and 502 each coordinate Cu cation. The chain crosses the membrane as a helical span at residues 574 to 594; that stretch reads ALIISTIIGVWGLYSIAQYGI. Residues 595–622 lie on the Cytoplasmic side of the membrane; sequence GEVIPNDEKVYHTLREILAENEIEVSRG.

It belongs to the multicopper oxidase family. Interacts with FTH1. Cu cation is required as a cofactor.

The protein localises to the cell membrane. Its function is as follows. Iron transport multicopper oxidase, which is required for Fe(2+) high affinity uptake. May be required to oxidize Fe(2+) and release it from the transporter. Essential component of copper-dependent iron transport. The chain is Iron transport multicopper oxidase FET5 (FET5) from Saccharomyces cerevisiae (strain ATCC 204508 / S288c) (Baker's yeast).